The primary structure comprises 166 residues: Regulatory protein RecX (166 aa).

Belongs to the RecX family.

It is found in the cytoplasm. Functionally, modulates RecA activity. In Salmonella arizonae (strain ATCC BAA-731 / CDC346-86 / RSK2980), this protein is Regulatory protein RecX.